Consider the following 1069-residue polypeptide: Thyrotropin-releasing hormone-degrading ectoenzyme (1069 aa).

A compositionally biased stretch (acidic residues) spans 1-11 (MALDGELGEQE). A disordered region spans residues 1–46 (MALDGELGEQEEEKKKKKKKKRKKKKEEEEEEEGAEKSSSPFAAAM). Over 1–85 (MALDGELGEQ…ERHIAVHKRL (85 aa)) the chain is Cytoplasmic. The span at 15–25 (KKKKKKKRKKK) shows a compositional bias: basic residues. The helical; Signal-anchor for type II membrane protein transmembrane segment at 86 to 106 (VLAFAVSLVALLAVTMLAVLL) threads the bilayer. The Extracellular portion of the chain corresponds to 107–1069 (SLRFDECGAS…FQWLGKALRH (963 aa)). The tract at residues 117 to 179 (ATPGADGGPS…PSEEEREPWE (63 aa)) is disordered. Over residues 121–136 (ADGGPSGFPERGGNGS) the composition is skewed to gly residues. N-linked (GlcNAc...) asparagine glycans are attached at residues asparagine 134, asparagine 205, asparagine 220, asparagine 267, and asparagine 383. Substrate is bound at residue 449–453 (AAMEN). A Zn(2+)-binding site is contributed by histidine 485. The Proton acceptor role is filled by glutamate 486. The Zn(2+) site is built by histidine 489 and glutamate 508. N-linked (GlcNAc...) asparagine glycosylation is found at asparagine 650, asparagine 679, asparagine 694, asparagine 708, asparagine 729, asparagine 845, and asparagine 951.

The protein belongs to the peptidase M1 family. In terms of assembly, homodimer; disulfide-linked. Zn(2+) serves as cofactor. As to expression, predominantly expressed in brain.

It is found in the membrane. It catalyses the reaction Release of the N-terminal pyroglutamyl group from pGlu-|-His-Xaa tripeptides and pGlu-|-His-Xaa-Gly tetrapeptides.. Functionally, specific inactivation of TRH after its release. The polypeptide is Thyrotropin-releasing hormone-degrading ectoenzyme (TRHDE) (Homo sapiens (Human)).